A 364-amino-acid chain; its full sequence is Putative [LysW]-aminoadipate semialdehyde/glutamate semialdehyde transaminase (364 aa).

Pyridoxal 5'-phosphate is bound by residues 90 to 91 (GT) and phenylalanine 117. A substrate-binding site is contributed by arginine 120. 202–205 (DEVQ) contacts pyridoxal 5'-phosphate. N6-(pyridoxal phosphate)lysine is present on lysine 230. Substrate is bound at residue serine 254. Pyridoxal 5'-phosphate is bound at residue threonine 255.

It belongs to the class-III pyridoxal-phosphate-dependent aminotransferase family. LysJ subfamily. In terms of assembly, homodimer. It depends on pyridoxal 5'-phosphate as a cofactor.

Its subcellular location is the cytoplasm. It catalyses the reaction [amino-group carrier protein]-C-terminal-gamma-(L-lysyl)-L-glutamate + 2-oxoglutarate = [amino-group carrier protein]-C-terminal-N-(1-carboxy-5-oxopentan-1-yl)-L-glutamine + L-glutamate. It carries out the reaction [amino-group carrier protein]-C-terminal-gamma-(L-ornithyl)-L-glutamate + 2-oxoglutarate = [amino-group carrier protein]-C-terminal-gamma-(L-glutamyl-5-semialdehyde)-L-glutamate + L-glutamate. It functions in the pathway amino-acid biosynthesis; L-lysine biosynthesis via AAA pathway; L-lysine from L-alpha-aminoadipate (Thermus route): step 4/5. It participates in amino-acid biosynthesis; L-arginine biosynthesis. In terms of biological role, involved in both the arginine and lysine biosynthetic pathways. This chain is Putative [LysW]-aminoadipate semialdehyde/glutamate semialdehyde transaminase, found in Pyrococcus abyssi (strain GE5 / Orsay).